The primary structure comprises 673 residues: Hemocyanin subunit C (673 aa).

The N-terminal stretch at 1-20 is a signal peptide; sequence MGAWKVWTFFAIALVVAVKA. Cu cation contacts are provided by His207, His211, and His237. Asn323 carries N-linked (GlcNAc...) asparagine glycosylation. His358, His362, and His398 together coordinate Cu cation. A disulfide bridge connects residues Cys568 and Cys616.

Belongs to the tyrosinase family. Hemocyanin subfamily. In terms of assembly, 36-chain polymer consisting of 6 hexamers, each of which includes 4 different chains, A, B, C and D. In terms of tissue distribution, hemolymph.

The protein localises to the secreted. The protein resides in the extracellular space. Functionally, hemocyanins are copper-containing oxygen carriers occurring freely dissolved in the hemolymph of many mollusks and arthropods. This Scutigera coleoptrata (House centipede) protein is Hemocyanin subunit C (HCC).